We begin with the raw amino-acid sequence, 277 residues long: MAIVKMKPTSAGRRGMVRVVTEGLYKGAPYAPLLEKKNSTAGRNNNGHITTRHKGGGHKHHYRVVDFKRNKDGIPAKVERIEYDPNRTAFIALLCYADGERRYIIAPRGIQAGAVLVSGAEAAIKVGNTLPIRNIPVGTTIHCIEMKPGKGAQIARSAGASAVLLAKEGAYAQVRLRSGEVRKINVDCRATIGEVGNEEQSLKKIGKAGANRWRGIRPTVRGVVMNPVDHPHGGGEGRTGEAREPVSPWGTPAKGYRTRNNKRTDNMIVRRRYSNKG.

2 disordered regions span residues 37 to 60 (KNSTAGRNNNGHITTRHKGGGHKH) and 223 to 264 (VVMN…NKRT). Positions 39–49 (STAGRNNNGHI) are enriched in polar residues. Basic residues predominate over residues 50-60 (TTRHKGGGHKH). Residues 229–244 (DHPHGGGEGRTGEARE) are compositionally biased toward basic and acidic residues.

This sequence belongs to the universal ribosomal protein uL2 family. As to quaternary structure, part of the 50S ribosomal subunit. Forms a bridge to the 30S subunit in the 70S ribosome.

In terms of biological role, one of the primary rRNA binding proteins. Required for association of the 30S and 50S subunits to form the 70S ribosome, for tRNA binding and peptide bond formation. It has been suggested to have peptidyltransferase activity; this is somewhat controversial. Makes several contacts with the 16S rRNA in the 70S ribosome. In Neisseria meningitidis serogroup B (strain ATCC BAA-335 / MC58), this protein is Large ribosomal subunit protein uL2.